We begin with the raw amino-acid sequence, 199 residues long: Protein-methionine-sulfoxide reductase heme-binding subunit MsrQ (199 aa).

5 helical membrane-spanning segments follow: residues 8–28 (ITWL…WLFW), 82–102 (LWCF…ELGI), 116–136 (PYLT…LTST), 149–169 (FLHN…LWSV), and 171–191 (ILSP…AWRY).

Belongs to the MsrQ family. As to quaternary structure, heterodimer of a catalytic subunit (MsrP) and a heme-binding subunit (MsrQ). Requires FMN as cofactor. Heme b serves as cofactor.

The protein resides in the cell inner membrane. Part of the MsrPQ system that repairs oxidized periplasmic proteins containing methionine sulfoxide residues (Met-O), using respiratory chain electrons. Thus protects these proteins from oxidative-stress damage caused by reactive species of oxygen and chlorine generated by the host defense mechanisms. MsrPQ is essential for the maintenance of envelope integrity under bleach stress, rescuing a wide series of structurally unrelated periplasmic proteins from methionine oxidation. MsrQ provides electrons for reduction to the reductase catalytic subunit MsrP, using the quinone pool of the respiratory chain. This Enterobacter sp. (strain 638) protein is Protein-methionine-sulfoxide reductase heme-binding subunit MsrQ.